The primary structure comprises 247 residues: Sensory rhodopsin-1 (247 aa).

Residues 1–4 (MTGA) are Extracellular-facing. A helical transmembrane segment spans residues 5 to 26 (VSAAYWIAAVAFLVGLGITAAL). Residues 27 to 35 (YAKLGESED) lie on the Cytoplasmic side of the membrane. The helical transmembrane segment at 36–57 (RGRLAALAVIPGFAGLAYAGMA) threads the bilayer. Topologically, residues 58-71 (LGIGTVTVNGAELV) are extracellular. The chain crosses the membrane as a helical span at residues 72-93 (GLRYVDWIVTTPLLVGFIGYVA). The Cytoplasmic segment spans residues 94 to 96 (GAS). The helical transmembrane segment at 97 to 119 (RRAIAGVMLADALMIAFGAGAVV) threads the bilayer. At 120–123 (TGGT) the chain is on the extracellular side. A helical transmembrane segment spans residues 124 to 151 (LKWVLFGVSSIFHVTLFAYLYVVFPRAV). The Cytoplasmic portion of the chain corresponds to 152 to 154 (PDD). Residues 155–182 (PMQRGLFSLLKNHVGLLWLAYPFVWLMG) traverse the membrane as a helical segment. The Extracellular portion of the chain corresponds to 183-190 (PAGIGFTT). The helical transmembrane segment at 191–223 (GVGAALTYAFLDVLAKVPYVYFFYARRQAFTDV) threads the bilayer. At lysine 206 the chain carries N6-(retinylidene)lysine. Over 224–247 (VSAATADREDATDAVGDGAPTAAD) the chain is Cytoplasmic.

This sequence belongs to the archaeal/bacterial/fungal opsin family. In terms of assembly, interacts with HTR-I.

The protein resides in the cell membrane. In terms of biological role, involved in the control of phototaxis. Mediates both photoattractant (in the orange light) and photophobic (in the near UV light) responses. The signal is then transmitted to the sensory rhodopsin I transducer (HTR-I). In Halobacterium sp. (strain SG1), this protein is Sensory rhodopsin-1 (sop1).